The chain runs to 278 residues: Indole-3-glycerol phosphate synthase (278 aa).

It belongs to the TrpC family.

The enzyme catalyses 1-(2-carboxyphenylamino)-1-deoxy-D-ribulose 5-phosphate + H(+) = (1S,2R)-1-C-(indol-3-yl)glycerol 3-phosphate + CO2 + H2O. The protein operates within amino-acid biosynthesis; L-tryptophan biosynthesis; L-tryptophan from chorismate: step 4/5. The chain is Indole-3-glycerol phosphate synthase from Pseudomonas fluorescens (strain ATCC BAA-477 / NRRL B-23932 / Pf-5).